The chain runs to 387 residues: Beta-alanyl-dopamine/carcinine hydrolase (387 aa).

This sequence belongs to the peptidase C45 family. As to quaternary structure, the unprocessed protein forms homodimers. May form heterodimers composed of a 15 kDa alpha subunit and a 30 kDa beta subunit. The protein is synthesized as a 43 kDa precursor which is then self-processed into a 15 kDa alpha subunit and a 30 kDa beta subunit. Processing appears to be necessary for beta-alanyl-dopamine/carcinine hydrolase activity. The beta subunit carries the beta-alanyl-dopamine/carcinine hydrolase activity. In terms of tissue distribution, expressed in body, head, optic lobes and retina (at protein level). Expressed in photoreceptor cells R1-R6 in the lamina and in photoreceptor cells R7 and R8 in the medulla (at protein level).

The protein localises to the cell projection. Its subcellular location is the axon. It is found in the cytoplasm. It carries out the reaction carcinine + H2O = histamine + beta-alanine. The catalysed reaction is beta-alanyl-dopamine + H2O = dopamine + beta-alanine. In the cuticle, catalyzes the hydrolysis of beta-alanyl-dopamine releasing dopamine and beta-alanine; dopamine is a metabolite involved in the pigmentation and sclerotization of the insect cuticle. In the photoreceptor cells, catalyzes the hydrolysis of carcinine releasing histamine and beta-alanine contributing to the recycling of the neurotransmitter histamine in the optical nerve system. Also, regulates the cuticular hydrocarbon composition in females. This Drosophila melanogaster (Fruit fly) protein is Beta-alanyl-dopamine/carcinine hydrolase.